Reading from the N-terminus, the 351-residue chain is Protein Tex24 (351 aa).

Disordered regions lie at residues 69–101, 117–144, and 275–298; these read PSTA…PSLS, PEDR…AQGK, and EKVK…PKSM. Over residues 73-83 the composition is skewed to basic residues; sequence HGKRKPGHLPR. Over residues 275-285 the composition is skewed to basic and acidic residues; it reads EKVKPSSHDMH.

In terms of tissue distribution, specific to testis, where it is expressed in spermatogonia.

The protein resides in the nucleus. Its function is as follows. Nuclear factor which might have a role in spermatogenesis. The polypeptide is Protein Tex24 (Mus musculus (Mouse)).